A 406-amino-acid polypeptide reads, in one-letter code: Probable endo-xylogalacturonan hydrolase A (406 aa).

The signal sequence occupies residues 1–18 (MLYPRNLALFSLLSLSSA). PbH1 repeat units lie at residues 183–213 (TQHV…DIGA), 214–235 (STHV…AFKP), 237–257 (SNYV…SVGS), and 299–320 (VKNV…QIES). Asp228 acts as the Proton donor in catalysis. Residue His251 is part of the active site. An N-linked (GlcNAc...) asparagine glycan is attached at Asn301.

The protein belongs to the glycosyl hydrolase 28 family.

It localises to the secreted. Pectinolytic enzyme involved in the degradation of xylogalacturonan (xga), a galacturonan backbone heavily substituted with xylose, and which is one important component of the hairy regions of pectin. Activity requires a galacturonic acid backbone substituted with xylose. This is Probable endo-xylogalacturonan hydrolase A (xghA) from Aspergillus fumigatus (strain ATCC MYA-4609 / CBS 101355 / FGSC A1100 / Af293) (Neosartorya fumigata).